The chain runs to 552 residues: Threonylcarbamoyladenosine tRNA methylthiotransferase (552 aa).

Positions 31–61 (YENKKTVTVRAKKRSQIRLESQEEEEKPKPT) are disordered. An MTTase N-terminal domain is found at 71-178 (QKVFVKTWGC…VVEVVEETLK (108 aa)). Positions 80, 115, 144, 221, 225, and 228 each coordinate [4Fe-4S] cluster. Positions 207 to 438 (RKNPLIEIIS…DLFYSYEPYA (232 aa)) constitute a Radical SAM core domain. Residues 438–500 (ADRVGEIYTV…KFSMVGEILD (63 aa)) form the TRAM domain. Residues 532–552 (FGIALVLGSLAFLIQLVVRLL) form a helical membrane-spanning segment.

Belongs to the methylthiotransferase family. CDKAL1 subfamily. [4Fe-4S] cluster is required as a cofactor.

The protein resides in the membrane. It catalyses the reaction N(6)-L-threonylcarbamoyladenosine(37) in tRNA + (sulfur carrier)-SH + AH2 + 2 S-adenosyl-L-methionine = 2-methylsulfanyl-N(6)-L-threonylcarbamoyladenosine(37) in tRNA + (sulfur carrier)-H + 5'-deoxyadenosine + L-methionine + A + S-adenosyl-L-homocysteine + 2 H(+). Its function is as follows. Catalyzes the methylthiolation of N6-threonylcarbamoyladenosine (t(6)A), leading to the formation of 2-methylthio-N6-threonylcarbamoyladenosine (ms(2)t(6)A) at position 37 in tRNAs that read codons beginning with adenine. In Drosophila melanogaster (Fruit fly), this protein is Threonylcarbamoyladenosine tRNA methylthiotransferase.